Reading from the N-terminus, the 79-residue chain is uncharacterized protein (79 aa).

This is an uncharacterized protein from Rhizobium leguminosarum.